Consider the following 278-residue polypeptide: HTH-type transcriptional activator RhaS (278 aa).

The HTH araC/xylS-type domain maps to 174–272 (NQLMAWLEDH…NWSPRDIRQG (99 aa)). 2 consecutive DNA-binding regions (H-T-H motif) follow at residues 191 to 212 (EAVAEQFSLSLRTLHRQLKQHT) and 239 to 262 (VTEIAYRCGFGDSNHFSTLFRREF).

Binds DNA as a dimer.

Its subcellular location is the cytoplasm. Its function is as follows. Activates expression of the rhaBAD and rhaT operons. This is HTH-type transcriptional activator RhaS from Salmonella paratyphi A (strain ATCC 9150 / SARB42).